Consider the following 65-residue polypeptide: Putative beta-neurotoxin RjAa8 (65 aa).

Residues 1–64 form the LCN-type CS-alpha/beta domain; the sequence is KEGYPMGRDG…VWDSSTNKCG (64 aa). Cystine bridges form between cysteine 11-cysteine 63, cysteine 15-cysteine 37, cysteine 22-cysteine 44, and cysteine 26-cysteine 46.

This sequence belongs to the long (4 C-C) scorpion toxin superfamily. Sodium channel inhibitor family. Beta subfamily. Expressed by the venom gland.

It localises to the secreted. Functionally, beta toxins bind voltage-independently at site-4 of sodium channels (Nav) and shift the voltage of activation toward more negative potentials thereby affecting sodium channel activation and promoting spontaneous and repetitive firing. The sequence is that of Putative beta-neurotoxin RjAa8 from Rhopalurus junceus (Caribbean blue scorpion).